We begin with the raw amino-acid sequence, 333 residues long: Neuropeptides B/W receptor type 2 (333 aa).

Residues Met-1–Tyr-45 are Extracellular-facing. N-linked (GlcNAc...) asparagine glycans are attached at residues Asn-24, Asn-29, and Asn-34. A helical membrane pass occupies residues Val-46 to Val-69. Topologically, residues Ile-70–Thr-80 are cytoplasmic. The helical transmembrane segment at Asn-81–His-105 threads the bilayer. The Extracellular segment spans residues Leu-106–Val-120. Cys-117 and Cys-197 are disulfide-bonded. The helical transmembrane segment at Leu-121–Val-140 threads the bilayer. Topologically, residues Asp-141 to Val-165 are cytoplasmic. A helical transmembrane segment spans residues Ala-166–Ala-185. The Extracellular segment spans residues Gly-186–Ala-211. A helical membrane pass occupies residues Ser-212 to Thr-233. Residues Asp-234–Lys-257 are Cytoplasmic-facing. A helical membrane pass occupies residues Val-258–Val-282. The Extracellular portion of the chain corresponds to Ala-283–Pro-292. A helical transmembrane segment spans residues Leu-293 to Ala-307. The Cytoplasmic segment spans residues Asn-308–Cys-333.

The protein belongs to the G-protein coupled receptor 1 family. As to expression, detected at high levels in caudate nucleus, hippocampus and amygdala; at moderate levels in the adult brain, thalamus, parietal cortex, pituitary gland, adrenal gland and lymph nodes.

It is found in the cell membrane. In terms of biological role, interacts specifically with a number of opioid ligands. Receptor for neuropeptides B and W, which may be involved in neuroendocrine system regulation, food intake and the organization of other signals. The sequence is that of Neuropeptides B/W receptor type 2 (NPBWR2) from Homo sapiens (Human).